A 428-amino-acid chain; its full sequence is Adenylosuccinate synthetase (428 aa).

GTP is bound by residues 12 to 18 (GDEGKGK) and 40 to 42 (GHT). Residue Asp-13 is the Proton acceptor of the active site. Residues Asp-13 and Gly-40 each contribute to the Mg(2+) site. Residues 13-16 (DEGK), 38-41 (NAGH), Thr-129, Arg-143, Gln-224, Thr-239, and Arg-303 each bind IMP. Residue His-41 is the Proton donor of the active site. 299 to 305 (VTTGRIR) contacts substrate. GTP-binding positions include Arg-305, 331 to 333 (KVD), and 410 to 412 (AYG).

Belongs to the adenylosuccinate synthetase family. As to quaternary structure, homodimer. The cofactor is Mg(2+).

It localises to the cytoplasm. The catalysed reaction is IMP + L-aspartate + GTP = N(6)-(1,2-dicarboxyethyl)-AMP + GDP + phosphate + 2 H(+). It participates in purine metabolism; AMP biosynthesis via de novo pathway; AMP from IMP: step 1/2. In terms of biological role, plays an important role in the de novo pathway of purine nucleotide biosynthesis. Catalyzes the first committed step in the biosynthesis of AMP from IMP. In Francisella philomiragia subsp. philomiragia (strain ATCC 25017 / CCUG 19701 / FSC 153 / O#319-036), this protein is Adenylosuccinate synthetase.